The chain runs to 352 residues: 26S proteasome regulatory subunit rpn-8 (352 aa).

Residues 16-152 form the MPN domain; sequence VSVAPLVLLS…TDAYFAVDEI (137 aa). The interval 303–352 is disordered; sequence NRQQQEENDAKKKEGENGEKKEGADKKEGSPAAANGESKEKENSPKEKKK. Composition is skewed to basic and acidic residues over residues 306 to 331 and 339 to 352; these read QQEE…KKEG and ESKE…EKKK.

Belongs to the peptidase M67A family.

Acts as a regulatory subunit of the 26S proteasome which is involved in the ATP-dependent degradation of ubiquitinated proteins. This is 26S proteasome regulatory subunit rpn-8 (rpn-8) from Neurospora crassa (strain ATCC 24698 / 74-OR23-1A / CBS 708.71 / DSM 1257 / FGSC 987).